Here is a 609-residue protein sequence, read N- to C-terminus: Putative transcriptional regulatory protein y4pA (609 aa).

The 221-residue stretch at 313-533 (IVGRSPSIQQ…LRSVLETAAI (221 aa)) folds into the Sigma-54 factor interaction domain. ATP is bound at residue 395–404 (HPKATLLIES). Residues 578–597 (RGEAARYLGISRKTLYNKMR) constitute a DNA-binding region (H-T-H motif).

Probable transcriptional regulator that acts in conjunction with sigma-54. This is Putative transcriptional regulatory protein y4pA from Sinorhizobium fredii (strain NBRC 101917 / NGR234).